The sequence spans 366 residues: Homer protein homolog 1 (366 aa).

A WH1 domain is found at 1 to 110 (MGEQPIFSTR…EKFQEFKEAA (110 aa)). Residue glycine 2 is modified to N-acetylglycine. The segment at 114-189 (KEKSQEKMEL…RTQGLSHASS (76 aa)) is disordered. Residues 138–147 (SPLTPESING) are compositionally biased toward polar residues. Positions 193-364 (KHWEAELATL…LRDNLAKLLE (172 aa)) form a coiled coil. A required for tetramerization region spans residues 302–366 (KLQEVEIRNK…DNLAKLLECS (65 aa)). At serine 318 the chain carries Phosphoserine.

Belongs to the Homer family. Tetramer; this tetrameric structure is critical for forming the high-order complex with SHANK1, which in turn is necessary for the structural and functional integrity of dendritic spines. Interacts with GRM1, GRM5, ITPR1, DYN3, RYR1, RYR2 and SHANK3. Interacts with IFT57 and OPHN1. Isoform 1 and isoform 2 encode coiled-coil structures that mediate homo- and heteromultimerization. Interacts with SHANK1; forms high-order polymerized complex with a mesh-like network structure, at least composed of SHANK1, HOMER1 and DLGAP1; the complex formation is SHANK1 multimerization dependent. Interacts with NFATC4. Interacts with DAGLA (via PPXXF motif); this interaction is required for the cell membrane localization of DAGLA. Interacts with SRGAP2. Highly expressed in cortex, Purkinje cells of the cerebellum, hippocampus, striatum and olfactory bulb. Isoform 1 and isoform 3 are expressed in skeletal and cardiac muscle.

It is found in the cytoplasm. The protein resides in the postsynaptic density. The protein localises to the synapse. Its subcellular location is the cell projection. It localises to the dendritic spine. Postsynaptic density scaffolding protein. Binds and cross-links cytoplasmic regions of GRM1, GRM5, ITPR1, DNM3, RYR1, RYR2, SHANK1 and SHANK3. By physically linking GRM1 and GRM5 with ER-associated ITPR1 receptors, it aids the coupling of surface receptors to intracellular calcium release. May also couple GRM1 to PI3 kinase through its interaction with AGAP2. Differentially regulates the functions of the calcium activated channel ryanodine receptors RYR1 and RYR2. Isoform 1 decreases the activity of RYR2, and increases the activity of RYR1, whereas isoform 3 counteracts the effects by competing for binding sites. Isoform 1 regulates the trafficking and surface expression of GRM5. Isoform 3 acts as a natural dominant negative, in dynamic competition with constitutively expressed isoform 1, and isoform 2 to regulate synaptic metabotropic glutamate function. Isoform 3, may be involved in the structural changes that occur at synapses during long-lasting neuronal plasticity and development. Forms a high-order complex with SHANK1, which in turn is necessary for the structural and functional integrity of dendritic spines. Negatively regulates T cell activation by inhibiting the calcineurin-NFAT pathway. Acts by competing with calcineurin/PPP3CA for NFAT protein binding, hence preventing NFAT activation by PPP3CA. This is Homer protein homolog 1 from Rattus norvegicus (Rat).